The chain runs to 1175 residues: Solute carrier family 9 member C1 (1175 aa).

The Extracellular segment spans residues 1–39; sequence MEMEEISENLTASHSIKLTNMWLELLKSVFLSTPQDLPE. A helical transmembrane segment spans residues 40 to 59; it reads IILILSLICTVGAFLNMHLK. Residues 60–64 are Cytoplasmic-facing; that stretch reads DFPIP. A helical membrane pass occupies residues 65-82; sequence LPVILFLIGCCFEILSFA. Over 83–98 the chain is Extracellular; sequence STQIQIYADAIQWMDP. The chain crosses the membrane as a helical span at residues 99–115; it reads DIFFGIFTPVIIFNVAF. At 116–125 the chain is on the cytoplasmic side; sequence DMDIYMLQKL. The helical transmembrane segment at 126 to 151 threads the bilayer; that stretch reads FWQILVITIPGFLINYTLILWYLQSV. The tract at residues 126 to 213 is transport core domain; it reads FWQILVITIP…SLVIYSGVVH (88 aa). Residues 152 to 157 are Extracellular-facing; it reads NKLSLK. The helical transmembrane segment at 158 to 183 threads the bilayer; sequence TVPWLLFSAVLISSDPMLTSASIRDL. Topologically, residues 184–186 are cytoplasmic; sequence GLS. A helical membrane pass occupies residues 187–212; it reads RSLTNLINGESLLTSVLSLVIYSGVV. Topologically, residues 213–225 are extracellular; it reads HIRFKSKSVNHTL. Residues 226 to 257 form a helical membrane-spanning segment; sequence AHKVMSTAWSYIVESFITGIVFTKVIQLWMAT. Topologically, residues 258–261 are cytoplasmic; sequence IFGD. A helical membrane pass occupies residues 262–283; sequence DVNHITLIFSVLYLIFYVCELV. Residues 284–286 are Extracellular-facing; sequence GMS. A helical transmembrane segment spans residues 287–300; it reads GIFTLATIGLFLNS. Residues 301–307 lie on the Cytoplasmic side of the membrane; the sequence is TSFKPGV. The helical transmembrane segment at 308 to 339 threads the bilayer; it reads EAFLLEFWNCLSFIGFLMVFTFIGLLIPAHTY. Residues 340-344 are Extracellular-facing; the sequence is LHISF. Residues 345-374 traverse the membrane as a helical segment; it reads SDVYYSLNIYFTLIVLRLLVFLLMSPILSR. The segment at 345–446 is transport core domain; it reads SDVYYSLNIY…FILPMAVTKL (102 aa). Residues 375-380 lie on the Cytoplasmic side of the membrane; sequence LGHGFS. Residues 381–411 form a helical membrane-spanning segment; that stretch reads WRWAFIMVWSEMKGTPNINMALLLAYSDISL. Over 412-415 the chain is Extracellular; the sequence is GSER. The helical transmembrane segment at 416 to 446 threads the bilayer; that stretch reads ERSQILFHGVSVCVITLIVNRFILPMAVTKL. Residues 447–632 are Cytoplasmic-facing; sequence GLRDVTSTKY…ACHRIVFTNE (186 aa). Residues 618–698 are ion transport-like; it reads YMFLHACHRI…EFFSHTWLLF (81 aa). The chain crosses the membrane as a helical span at residues 633–653; the sequence is FEYTGYLVVLMSTYPMIICWI. Residues 654-657 are Extracellular-facing; the sequence is SRLK. The chain crosses the membrane as a helical span at residues 658–684; sequence DIYDNEIKCANYYFLAFYILEALLKVA. Residues 685–691 are Cytoplasmic-facing; the sequence is AMRKEFF. The chain crosses the membrane as a helical span at residues 692 to 716; it reads SHTWLLFELGITLVGVLDIILIETD. Over 717-724 the chain is Extracellular; the sequence is SISYNFDL. The helical transmembrane segment at 725–751 threads the bilayer; the sequence is TETVVFMNVIRLLRILRILKLVTPKLL. Residues 752-1175 are Cytoplasmic-facing; the sequence is QIIDKRMSQQ…EELIEENINI (424 aa). Residues 1137–1146 show a composition bias toward basic and acidic residues; that stretch reads MKPDSERESF. A disordered region spans residues 1137-1175; the sequence is MKPDSERESFETLDETSEEDNGKKENQENEELIEENINI. Residues 1164 to 1175 are compositionally biased toward acidic residues; it reads ENEELIEENINI.

This sequence belongs to the monovalent cation:proton antiporter 1 (CPA1) transporter (TC 2.A.36) family. In terms of assembly, interacts with soluble adenylyl cyclase (sAC). As to expression, testis-specific. Specifically present in the principal piece of sperm tail (at protein level).

The protein localises to the cell projection. Its subcellular location is the cilium. It localises to the flagellum membrane. Sperm-specific solute carrier involved in intracellular pH regulation of spermatozoa. Required for sperm motility and fertility. Involved in sperm cell hyperactivation, a step needed for sperm motility which is essential late in the preparation of sperm for fertilization. Required for the expression and bicarbonate regulation of the soluble adenylyl cyclase (sAC). The protein is Solute carrier family 9 member C1 (Slc9c1) of Mus musculus (Mouse).